Consider the following 295-residue polypeptide: Protoheme IX farnesyltransferase (295 aa).

9 consecutive transmembrane segments (helical) span residues 27 to 47 (IMYL…GNIH), 48 to 68 (PFIG…AGAI), 93 to 115 (IARS…VMMI), 119 to 136 (YLSG…SLVY), 147 to 167 (NIVI…TSVT), 175 to 195 (LILF…LSLL), 219 to 239 (IYIL…GIFL), 247 to 267 (TCAI…FVSI), and 275 to 295 (MFTY…ISSF).

Belongs to the UbiA prenyltransferase family. Protoheme IX farnesyltransferase subfamily.

Its subcellular location is the cell inner membrane. The enzyme catalyses heme b + (2E,6E)-farnesyl diphosphate + H2O = Fe(II)-heme o + diphosphate. It functions in the pathway porphyrin-containing compound metabolism; heme O biosynthesis; heme O from protoheme: step 1/1. In terms of biological role, converts heme B (protoheme IX) to heme O by substitution of the vinyl group on carbon 2 of heme B porphyrin ring with a hydroxyethyl farnesyl side group. This Ehrlichia chaffeensis (strain ATCC CRL-10679 / Arkansas) protein is Protoheme IX farnesyltransferase.